A 461-amino-acid chain; its full sequence is GTPase Era, mitochondrial (461 aa).

A mitochondrion-targeting transit peptide spans 1–35 (MAAPWLQRWRGAYAGPSGPLRLVRLHGVQRSSWRA). Residues 39–73 (AAGAFGAGPHPGPPQRAANPGPGPHPPPVATSREK) form a disordered region. The Era-type G domain occupies 89–354 (KVLRISIIGA…QYLLMQAKPG (266 aa)). Residues 97-104 (GAPNSGKS) form a G1 region. 97 to 104 (GAPNSGKS) contacts GTP. The tract at residues 123 to 127 (HTTRC) is G2. A G3 region spans residues 144 to 147 (DTPG). GTP contacts are provided by residues 144–148 (DTPGL) and 213–216 (NKVD). The interval 213-216 (NKVD) is G4. The segment at 260 to 319 (KVTQTPPPENRARESPCQLETDKAQEGSSLDNSSDVKASESSLDTEAREQKPYKYGDQKN) is disordered. Over residues 269-284 (NRARESPCQLETDKAQ) the composition is skewed to basic and acidic residues. Residues 285 to 303 (EGSSLDNSSDVKASESSLD) are compositionally biased toward polar residues. Residues 304 to 319 (TEAREQKPYKYGDQKN) show a composition bias toward basic and acidic residues. The interval 332–334 (LAA) is G5. Residues 380-461 (ILEYLPLEVP…RLKLKVEVKS (82 aa)) form the KH type-2 domain.

It belongs to the TRAFAC class TrmE-Era-EngA-EngB-Septin-like GTPase superfamily. Era GTPase family.

The protein localises to the mitochondrion matrix. The protein resides in the mitochondrion inner membrane. Probable GTPase that plays a role in the mitochondrial ribosomal small subunit assembly. Specifically binds the 12S mitochondrial rRNA (12S mt-rRNA) to a 33 nucleotide section delineating the 3' terminal stem-loop region. May act as a chaperone that protects the 12S mt-rRNA on the 28S mitoribosomal subunit during ribosomal small subunit assembly. The chain is GTPase Era, mitochondrial (ERAL1) from Gallus gallus (Chicken).